Reading from the N-terminus, the 253-residue chain is Triosephosphate isomerase (253 aa).

8–10 (NWK) serves as a coordination point for substrate. H93 functions as the Electrophile in the catalytic mechanism. E165 functions as the Proton acceptor in the catalytic mechanism. Residues G171, S210, and 231–232 (GG) contribute to the substrate site.

This sequence belongs to the triosephosphate isomerase family. As to quaternary structure, homodimer.

Its subcellular location is the cytoplasm. The catalysed reaction is D-glyceraldehyde 3-phosphate = dihydroxyacetone phosphate. The protein operates within carbohydrate biosynthesis; gluconeogenesis. It functions in the pathway carbohydrate degradation; glycolysis; D-glyceraldehyde 3-phosphate from glycerone phosphate: step 1/1. Functionally, involved in the gluconeogenesis. Catalyzes stereospecifically the conversion of dihydroxyacetone phosphate (DHAP) to D-glyceraldehyde-3-phosphate (G3P). The sequence is that of Triosephosphate isomerase from Francisella tularensis subsp. tularensis (strain FSC 198).